The sequence spans 263 residues: Fructose-bisphosphate aldolase class 1 (263 aa).

Residues 24–25 (DH), histidine 29, aspartate 33, and tryptophan 144 each bind substrate. Tyrosine 146 acts as the Proton donor in catalysis. Substrate is bound by residues arginine 148, 177 to 179 (KIK), 202 to 204 (SGG), and 231 to 232 (GR). The Schiff-base intermediate with dihydroxyacetone-P role is filled by lysine 177.

This sequence belongs to the DeoC/FbaB aldolase family. In terms of assembly, homodecamer (dimer of pentamers).

It is found in the cytoplasm. It carries out the reaction beta-D-fructose 1,6-bisphosphate = D-glyceraldehyde 3-phosphate + dihydroxyacetone phosphate. With respect to regulation, activated by citrate. Catalyzes the reversible cleavage of fructose 1,6-bisphosphate (FBP) to glyceraldehyde 3-phosphate (GAP) and dihydroxyacetone phosphate (DHAP). The sequence is that of Fructose-bisphosphate aldolase class 1 (fba) from Thermoproteus tenax (strain ATCC 35583 / DSM 2078 / JCM 9277 / NBRC 100435 / Kra 1).